Consider the following 159-residue polypeptide: Transcriptional repressor NrdR (159 aa).

Residues 3 to 34 fold into a zinc finger; sequence CPFCRHEDTQVVDSRVSEDGAAIRRRRRCSAC. An ATP-cone domain is found at 49–139; sequence PAVVKKDGSR…VYRRFEDVSE (91 aa).

It belongs to the NrdR family. Requires Zn(2+) as cofactor.

Its function is as follows. Negatively regulates transcription of bacterial ribonucleotide reductase nrd genes and operons by binding to NrdR-boxes. This is Transcriptional repressor NrdR from Burkholderia ambifaria (strain MC40-6).